A 116-amino-acid chain; its full sequence is Large ribosomal subunit protein eL22A (116 aa).

This sequence belongs to the eukaryotic ribosomal protein eL22 family.

The chain is Large ribosomal subunit protein eL22A (rpl22) from Dictyostelium discoideum (Social amoeba).